The sequence spans 351 residues: Prostaglandin reductase 2 (351 aa).

99–100 (FY) is a substrate binding site. NADP(+) is bound by residues 165-168 (GACG), Lys192, Tyr208, Asn231, 253-259 (CGQISQY), 287-289 (FLV), and Asn337. Substrate is bound at residue 288 to 290 (LVL).

The protein belongs to the NADP-dependent oxidoreductase L4BD family. Monomer.

Its subcellular location is the cytoplasm. The catalysed reaction is 13,14-dihydro-15-oxo-prostaglandin E2 + NAD(+) = 15-oxoprostaglandin E2 + NADH + H(+). The enzyme catalyses 13,14-dihydro-15-oxo-prostaglandin E2 + NADP(+) = 15-oxoprostaglandin E2 + NADPH + H(+). It carries out the reaction 13,14-dihydro-15-oxo-PGF2alpha + NADP(+) = 15-oxoprostaglandin F2alpha + NADPH + H(+). It catalyses the reaction 13,14-dihydro-15-oxo-prostaglandin E1 + NADP(+) = 15-oxoprostaglandin E1 + NADPH + H(+). The catalysed reaction is 13,14-dihydro-15-oxo-prostaglandin F1alpha + NADP(+) = 15-oxoprostaglandin F1alpha + NADPH + H(+). Functions as 15-oxo-prostaglandin 13-reductase and acts on 15-keto-PGE1, 15-keto-PGE2, 15-keto-PGE1-alpha and 15-keto-PGE2-alpha with highest activity towards 15-keto-PGE2. Overexpression represses transcriptional activity of PPARG and inhibits adipocyte differentiation. This is Prostaglandin reductase 2 (PTGR2) from Pongo abelii (Sumatran orangutan).